The following is a 725-amino-acid chain: Putative oligopeptide transporter YGL114W (725 aa).

Transmembrane regions (helical) follow at residues 28 to 48, 134 to 154, 254 to 274, 353 to 373, 449 to 469, 472 to 492, 564 to 584, 644 to 664, and 697 to 717; these read ATIA…QFGL, FREL…FAVP, IIIL…SYFV, WILW…FIVV, ISGC…LFGI, IPLY…ILGI, FCAQ…MYLC, YGYG…GIFN, and IVFS…NMLF.

This sequence belongs to the oligopeptide OPT transporter family.

The protein localises to the membrane. This Saccharomyces cerevisiae (strain ATCC 204508 / S288c) (Baker's yeast) protein is Putative oligopeptide transporter YGL114W.